We begin with the raw amino-acid sequence, 375 residues long: MNVEEIEKYLEENFDKLPEGCKQCVKGGKLVLFITGICNNNCYYCPLSEKRKNKDVIYANERLITTVEEAIEEAKLCSSKGVGITGGNPLLKINRTVKFLKALKKEFDEFHAHLYTTPETVNEENLKLLKEADLDEIRLHPTKIFNEGYDEEYIKFLCNKLNLCNKYIEDVGVEIPAIPNMENEILKLAEAIDGIAKFMNINELEFSEENYHELEKRGFMPKDDVSNAIAGSEETALKVIKEFKGDLFINYCPSVLKDAIQMRNRLINRAKNVAKPYEVITEDGLLLRGIMIFDNEDDLKEMAEILEENEIEFEIIDKNICLNPFILEDIIEEMKRQRFPITFSAYISELYPTADALEVERIPLITKKLKFRRRR.

The Radical SAM core domain maps to 23-246 (QCVKGGKLVL…LKVIKEFKGD (224 aa)). [4Fe-4S] cluster contacts are provided by Cys38, Cys42, and Cys45. S-adenosyl-L-methionine-binding positions include 44–46 (YCP) and Gly87.

The protein belongs to the organic radical-activating enzymes family. It depends on [4Fe-4S] cluster as a cofactor.

It catalyses the reaction glycyl-[protein] + reduced [flavodoxin] + S-adenosyl-L-methionine = glycin-2-yl radical-[protein] + semiquinone [flavodoxin] + 5'-deoxyadenosine + L-methionine + H(+). The protein is Putative glycyl-radical enzyme activating enzyme MJ0021 of Methanocaldococcus jannaschii (strain ATCC 43067 / DSM 2661 / JAL-1 / JCM 10045 / NBRC 100440) (Methanococcus jannaschii).